A 329-amino-acid chain; its full sequence is Segregation and condensation protein B (329 aa).

Disordered stretches follow at residues 1–39 (MTTG…GPAD), 252–274 (IVEK…SDPA), and 286–329 (SEAA…PKPE).

Belongs to the ScpB family. In terms of assembly, homodimer. Homodimerization may be required to stabilize the binding of ScpA to the Smc head domains. Component of the Structural Maintenance of Chromosome (SMC) condensin-like complex composed of ScpA, ScpB and the Smc homodimer. ScpA and ScpB bind to the head domain of Smc, the presence of the three proteins is required for the association of the complex with DNA.

It localises to the cytoplasm. Functionally, a conditionally essential component of the chromosome segregation machinery. Required for chromosome condensation and partitioning. Important for positioning and anchoring of ParB-parS complexes (ori of replication) in the subpolar region, and of the ter replication site, as well as for segration of the ParB-parS complex and thus chromosome segregation. Probably acts via the formation of a condensin-like complex containing Smc, ScpA and ScpB that pulls DNA away from mid-cell into both cell halves. The sequence is that of Segregation and condensation protein B from Myxococcus xanthus (strain DK1622).